We begin with the raw amino-acid sequence, 183 residues long: NADH-quinone oxidoreductase subunit A (183 aa).

3 helical membrane-spanning segments follow: residues 11–31 (IIAF…VPLL), 63–83 (FYLV…LYAW), and 98–118 (VVIF…VGAL). The disordered stretch occupies residues 159-183 (TGQIPAQSSGRVKSKTTPALSSEKE).

This sequence belongs to the complex I subunit 3 family. NDH-1 is composed of 14 different subunits. Subunits NuoA, H, J, K, L, M, N constitute the membrane sector of the complex.

It is found in the cell inner membrane. It catalyses the reaction a quinone + NADH + 5 H(+)(in) = a quinol + NAD(+) + 4 H(+)(out). NDH-1 shuttles electrons from NADH, via FMN and iron-sulfur (Fe-S) centers, to quinones in the respiratory chain. The immediate electron acceptor for the enzyme in this species is believed to be ubiquinone. Couples the redox reaction to proton translocation (for every two electrons transferred, four hydrogen ions are translocated across the cytoplasmic membrane), and thus conserves the redox energy in a proton gradient. This is NADH-quinone oxidoreductase subunit A from Acinetobacter baumannii (strain AYE).